A 140-amino-acid polypeptide reads, in one-letter code: Large-conductance mechanosensitive channel 3 (140 aa).

3 consecutive transmembrane segments (helical) span residues 8-28, 30-50, and 81-101; these read FISK…AAFG, IVTS…FGGL, and GSFI…FLMV.

This sequence belongs to the MscL family. Homopentamer.

The protein resides in the cell inner membrane. Its function is as follows. Channel that opens in response to stretch forces in the membrane lipid bilayer. May participate in the regulation of osmotic pressure changes within the cell. The sequence is that of Large-conductance mechanosensitive channel 3 from Mesorhizobium japonicum (strain LMG 29417 / CECT 9101 / MAFF 303099) (Mesorhizobium loti (strain MAFF 303099)).